Here is a 1004-residue protein sequence, read N- to C-terminus: Glycine dehydrogenase (decarboxylating), mitochondrial (1004 aa).

Lysine 738 is subject to N6-(pyridoxal phosphate)lysine.

It belongs to the GcvP family. As to quaternary structure, homodimer. Interacts with GCSH. The glycine cleavage system is composed of four proteins: P (GLDC), T (GCST), L (DLD) and H (GCSH). It depends on pyridoxal 5'-phosphate as a cofactor. In terms of tissue distribution, liver (at protein level).

The protein localises to the mitochondrion. It carries out the reaction N(6)-[(R)-lipoyl]-L-lysyl-[glycine-cleavage complex H protein] + glycine + H(+) = N(6)-[(R)-S(8)-aminomethyldihydrolipoyl]-L-lysyl-[glycine-cleavage complex H protein] + CO2. With respect to regulation, stimulated by lipoic acid. Inhibited in presence of methylamine. In terms of biological role, the glycine cleavage system catalyzes the degradation of glycine. The P protein (GLDC) binds the alpha-amino group of glycine through its pyridoxal phosphate cofactor; CO(2) is released and the remaining methylamine moiety is then transferred to the lipoamide cofactor of the H protein (GCSH). The protein is Glycine dehydrogenase (decarboxylating), mitochondrial of Gallus gallus (Chicken).